We begin with the raw amino-acid sequence, 86 residues long: MKTLLLTLVVVTIVCLDLGYTLTCLNCPEVFCKKFQTCRNGEKICFKKFDERKLFGKRYRRGCAATCPEAKPREIVQCCSTDRCNR.

Positions 1 to 21 are cleaved as a signal peptide; that stretch reads MKTLLLTLVVVTIVCLDLGYT. Cystine bridges form between cysteine 24–cysteine 45, cysteine 27–cysteine 32, cysteine 38–cysteine 63, cysteine 67–cysteine 78, and cysteine 79–cysteine 84.

Belongs to the three-finger toxin family. Ancestral subfamily. Orphan group II sub-subfamily. As to expression, expressed by the venom gland.

It is found in the secreted. Binds with low affinity to muscular (alpha-1-beta-1-delta-epsilon/CHRNA1-CHRNB1-CHRND-CHRNE) and very low affinity to neuronal (alpha-7/CHRNA7) nicotinic acetylcholine receptor (nAChR). The polypeptide is Weak neurotoxin 10 (WNTX10) (Naja sputatrix (Malayan spitting cobra)).